Here is a 419-residue protein sequence, read N- to C-terminus: Serine hydroxymethyltransferase (419 aa).

(6S)-5,6,7,8-tetrahydrofolate-binding positions include leucine 121 and 125-127 (GHL). Residue lysine 230 is modified to N6-(pyridoxal phosphate)lysine. 355 to 357 (SPF) serves as a coordination point for (6S)-5,6,7,8-tetrahydrofolate.

This sequence belongs to the SHMT family. Homodimer. It depends on pyridoxal 5'-phosphate as a cofactor.

It is found in the cytoplasm. It carries out the reaction (6R)-5,10-methylene-5,6,7,8-tetrahydrofolate + glycine + H2O = (6S)-5,6,7,8-tetrahydrofolate + L-serine. It participates in one-carbon metabolism; tetrahydrofolate interconversion. Its pathway is amino-acid biosynthesis; glycine biosynthesis; glycine from L-serine: step 1/1. Its function is as follows. Catalyzes the reversible interconversion of serine and glycine with tetrahydrofolate (THF) serving as the one-carbon carrier. This reaction serves as the major source of one-carbon groups required for the biosynthesis of purines, thymidylate, methionine, and other important biomolecules. Also exhibits THF-independent aldolase activity toward beta-hydroxyamino acids, producing glycine and aldehydes, via a retro-aldol mechanism. The polypeptide is Serine hydroxymethyltransferase (Alkalilimnicola ehrlichii (strain ATCC BAA-1101 / DSM 17681 / MLHE-1)).